The sequence spans 257 residues: Type III pantothenate kinase (257 aa).

ATP is bound at residue 6–13; sequence DVGNTSTK. A substrate-binding site is contributed by 109–112; the sequence is GADR. Aspartate 111 serves as the catalytic Proton acceptor. Residue aspartate 132 participates in K(+) binding. Threonine 135 contacts ATP. Threonine 187 contributes to the substrate binding site.

Belongs to the type III pantothenate kinase family. In terms of assembly, homodimer. NH4(+) serves as cofactor. Requires K(+) as cofactor.

The protein localises to the cytoplasm. The catalysed reaction is (R)-pantothenate + ATP = (R)-4'-phosphopantothenate + ADP + H(+). It participates in cofactor biosynthesis; coenzyme A biosynthesis; CoA from (R)-pantothenate: step 1/5. In terms of biological role, catalyzes the phosphorylation of pantothenate (Pan), the first step in CoA biosynthesis. The protein is Type III pantothenate kinase of Anaplasma marginale (strain Florida).